A 318-amino-acid polypeptide reads, in one-letter code: Ribose-phosphate pyrophosphokinase 1 (318 aa).

96–101 (RQDKKD) provides a ligand contact to ATP. Mg(2+) contacts are provided by Asp-128, His-130, Asp-139, and Asp-143. His-130 is an ATP binding site. The segment at 212–227 (KDRVAILVDDMADTCG) is binding of phosphoribosylpyrophosphate.

Belongs to the ribose-phosphate pyrophosphokinase family. In terms of assembly, homodimer. The active form is probably a hexamer composed of 3 homodimers. Mg(2+) is required as a cofactor.

It carries out the reaction D-ribose 5-phosphate + ATP = 5-phospho-alpha-D-ribose 1-diphosphate + AMP + H(+). Its pathway is metabolic intermediate biosynthesis; 5-phospho-alpha-D-ribose 1-diphosphate biosynthesis; 5-phospho-alpha-D-ribose 1-diphosphate from D-ribose 5-phosphate (route I): step 1/1. Activated by magnesium and inorganic phosphate. Its function is as follows. Catalyzes the synthesis of phosphoribosylpyrophosphate (PRPP) that is essential for nucleotide synthesis. This Macaca fascicularis (Crab-eating macaque) protein is Ribose-phosphate pyrophosphokinase 1 (PRPS1).